The following is a 432-amino-acid chain: 3-phosphoshikimate 1-carboxyvinyltransferase (432 aa).

3-phosphoshikimate contacts are provided by Lys-23, Ser-24, and Arg-28. Position 23 (Lys-23) interacts with phosphoenolpyruvate. Phosphoenolpyruvate is bound by residues Gly-95 and Arg-123. Ser-167, Gln-169, Asp-317, and Lys-344 together coordinate 3-phosphoshikimate. Gln-169 contacts phosphoenolpyruvate. Asp-317 serves as the catalytic Proton acceptor. Residues Arg-348 and Arg-390 each coordinate phosphoenolpyruvate.

The protein belongs to the EPSP synthase family. Monomer.

It localises to the cytoplasm. It carries out the reaction 3-phosphoshikimate + phosphoenolpyruvate = 5-O-(1-carboxyvinyl)-3-phosphoshikimate + phosphate. It functions in the pathway metabolic intermediate biosynthesis; chorismate biosynthesis; chorismate from D-erythrose 4-phosphate and phosphoenolpyruvate: step 6/7. Its function is as follows. Catalyzes the transfer of the enolpyruvyl moiety of phosphoenolpyruvate (PEP) to the 5-hydroxyl of shikimate-3-phosphate (S3P) to produce enolpyruvyl shikimate-3-phosphate and inorganic phosphate. The chain is 3-phosphoshikimate 1-carboxyvinyltransferase from Staphylococcus aureus (strain Newman).